Consider the following 643-residue polypeptide: 1-deoxy-D-xylulose-5-phosphate synthase (643 aa).

Thiamine diphosphate-binding positions include His79 and 120-122 (AHA). Asp151 provides a ligand contact to Mg(2+). Residues 152-153 (GS), Asn180, Tyr287, and Glu369 contribute to the thiamine diphosphate site. Asn180 is a Mg(2+) binding site.

It belongs to the transketolase family. DXPS subfamily. Homodimer. The cofactor is Mg(2+). Thiamine diphosphate is required as a cofactor.

The catalysed reaction is D-glyceraldehyde 3-phosphate + pyruvate + H(+) = 1-deoxy-D-xylulose 5-phosphate + CO2. The protein operates within metabolic intermediate biosynthesis; 1-deoxy-D-xylulose 5-phosphate biosynthesis; 1-deoxy-D-xylulose 5-phosphate from D-glyceraldehyde 3-phosphate and pyruvate: step 1/1. Its function is as follows. Catalyzes the acyloin condensation reaction between C atoms 2 and 3 of pyruvate and glyceraldehyde 3-phosphate to yield 1-deoxy-D-xylulose-5-phosphate (DXP). The chain is 1-deoxy-D-xylulose-5-phosphate synthase from Maricaulis maris (strain MCS10) (Caulobacter maris).